The following is a 1522-amino-acid chain: Adhesion G protein-coupled receptor B3 (1522 aa).

The signal sequence occupies residues 1–25; that stretch reads MKAVRNLLIYIFSTYLLVMFGFNAA. The Extracellular portion of the chain corresponds to 26–880; the sequence is QDFWCSTLVK…MESSGTPSVT (855 aa). Residues 30 to 159 enclose the CUB domain; that stretch reads CSTLVKGVIY…KSFFEFLVLN (130 aa). 5 N-linked (GlcNAc...) asparagine glycosylation sites follow: N51, N54, N82, N105, and N241. TSP type-1 domains are found at residues 291–343, 345–398, 400–453, and 455–508; these read ESGV…ALCP, HGVW…ALCP, DGQW…PECT, and NGQW…QRCP. Cystine bridges form between C303–C336, C307–C342, C318–C326, C357–C392, C361–C397, C372–C382, C412–C447, C416–C452, C427–C437, C467–C502, C471–C507, C482–C492, C514–C549, and C537–C567. N-linked (GlcNAc...) asparagine glycosylation occurs at N337. N418 carries N-linked (GlcNAc...) asparagine glycosylation. N-linked (GlcNAc...) asparagine glycosylation occurs at N540. Phosphoserine is present on S619. N-linked (GlcNAc...) asparagine glycosylation is found at N625, N779, N812, and N828. One can recognise a GAIN-B domain in the interval 693–869; sequence QNSYLMTGNV…AILAQQPREI (177 aa). Intrachain disulfides connect C819/C851 and C839/C853. A GPS region spans residues 819–869; it reads CVLWDDSKSNESLGTWSTQGCKTVLTDASHTKCLCDRLSTFAILAQQPREI. Residues 881-901 form a helical membrane-spanning segment; sequence LIVGSGLSCLALITLAVVYAA. Topologically, residues 902 to 910 are cytoplasmic; that stretch reads LWRYIRSER. The helical transmembrane segment at 911 to 931 threads the bilayer; the sequence is SIILINFCLSIISSNILILVG. Residues 932–939 lie on the Extracellular side of the membrane; the sequence is QTQTHNKS. N937 carries an N-linked (GlcNAc...) asparagine glycan. The chain crosses the membrane as a helical span at residues 940-960; the sequence is ICTTTTAFLHFFFLASFCWVL. Residues 961 to 981 lie on the Cytoplasmic side of the membrane; sequence TEAWQSYMAVTGKIRTRLIRK. Residues 982–1002 form a helical membrane-spanning segment; the sequence is RFLCLGWGLPALVVATSVGFT. The Extracellular portion of the chain corresponds to 1003–1023; that stretch reads RTKGYGTDHYCWLSLEGGLLY. Residues 1024 to 1044 traverse the membrane as a helical segment; sequence AFVGPAAAVVLVNMVIGILVF. Over 1045-1098 the chain is Cytoplasmic; it reads NKLVSRDGILDKKLKHRAGQMSEPHSGLTLKCAKCGVVSTTALSATTASNAMAS. The chain crosses the membrane as a helical span at residues 1099-1119; sequence LWSSCVVLPLLALTWMSAVLA. Over 1120–1125 the chain is Extracellular; sequence MTDKRS. Residues 1126 to 1146 traverse the membrane as a helical segment; that stretch reads ILFQILFAVFDSLQGFVIVMV. Over 1147-1522 the chain is Cytoplasmic; it reads HCILRREVQD…VQEGDFQTEV (376 aa). Phosphoserine occurs at positions 1220 and 1411.

The protein belongs to the G-protein coupled receptor 2 family. Adhesion G-protein coupled receptor (ADGR) subfamily. As to quaternary structure, forms a heterodimer, consisting of a large extracellular region non-covalently linked to a seven-transmembrane moiety. Interacts (via its TSRs) with C1QL1, C1QL2, C1QL3 and C1QL4. Interacts via (C-terminus) with ELMO1, ELMO2 and ELMO3. Post-translationally, the endogenous protein is proteolytically cleaved into 2 subunits, an extracellular subunit and a seven-transmembrane subunit. In terms of tissue distribution, brain-specific expression.

The protein localises to the cell membrane. In terms of biological role, receptor that plays a role in the regulation of synaptogenesis and dendritic spine formation at least partly via interaction with ELMO1 and RAC1 activity. Promotes myoblast fusion through ELMO/DOCK1. The chain is Adhesion G protein-coupled receptor B3 (Adgrb3) from Mus musculus (Mouse).